Here is a 407-residue protein sequence, read N- to C-terminus: B3 domain-containing protein Os07g0183200 (407 aa).

A DNA-binding region (TF-B3) is located at residues 124-227; the sequence is FVKTLMISDF…ELYVGVRRQR (104 aa).

It is found in the nucleus. This Oryza sativa subsp. japonica (Rice) protein is B3 domain-containing protein Os07g0183200.